The sequence spans 101 residues: Small ribosomal subunit protein uS10 (101 aa).

Belongs to the universal ribosomal protein uS10 family. Part of the 30S ribosomal subunit.

In terms of biological role, involved in the binding of tRNA to the ribosomes. The sequence is that of Small ribosomal subunit protein uS10 from Mycoplasmopsis synoviae (strain 53) (Mycoplasma synoviae).